Here is a 284-residue protein sequence, read N- to C-terminus: L-ribulose-5-phosphate 3-epimerase UlaE (284 aa).

It belongs to the L-ribulose-5-phosphate 3-epimerase family.

The enzyme catalyses L-ribulose 5-phosphate = L-xylulose 5-phosphate. The protein operates within cofactor degradation; L-ascorbate degradation; D-xylulose 5-phosphate from L-ascorbate: step 3/4. Functionally, catalyzes the isomerization of L-xylulose-5-phosphate to L-ribulose-5-phosphate. Is involved in the anaerobic L-ascorbate utilization. The chain is L-ribulose-5-phosphate 3-epimerase UlaE from Salmonella typhi.